The primary structure comprises 85 residues: Putative membrane protein insertion efficiency factor (85 aa).

Belongs to the UPF0161 family.

Its subcellular location is the cell inner membrane. Its function is as follows. Could be involved in insertion of integral membrane proteins into the membrane. This is Putative membrane protein insertion efficiency factor from Dictyoglomus thermophilum (strain ATCC 35947 / DSM 3960 / H-6-12).